The sequence spans 304 residues: UDP-3-O-acyl-N-acetylglucosamine deacetylase (304 aa).

His78, His237, and Asp241 together coordinate Zn(2+). Catalysis depends on His264, which acts as the Proton donor.

It belongs to the LpxC family. Requires Zn(2+) as cofactor.

It carries out the reaction a UDP-3-O-[(3R)-3-hydroxyacyl]-N-acetyl-alpha-D-glucosamine + H2O = a UDP-3-O-[(3R)-3-hydroxyacyl]-alpha-D-glucosamine + acetate. It functions in the pathway glycolipid biosynthesis; lipid IV(A) biosynthesis; lipid IV(A) from (3R)-3-hydroxytetradecanoyl-[acyl-carrier-protein] and UDP-N-acetyl-alpha-D-glucosamine: step 2/6. Its function is as follows. Catalyzes the hydrolysis of UDP-3-O-myristoyl-N-acetylglucosamine to form UDP-3-O-myristoylglucosamine and acetate, the committed step in lipid A biosynthesis. The chain is UDP-3-O-acyl-N-acetylglucosamine deacetylase from Xylella fastidiosa (strain Temecula1 / ATCC 700964).